We begin with the raw amino-acid sequence, 180 residues long: uncharacterized protein (180 aa).

Residues 1-24 (MKKKTIFQCVILFFSILNIHVGMA) form the signal peptide.

In terms of biological role, part of the elfADCG-ycbUVF fimbrial operon, which promotes adhesion of bacteria to different abiotic surfaces. This is an uncharacterized protein from Escherichia coli (strain K12).